The primary structure comprises 263 residues: Type III pantothenate kinase (263 aa).

Position 14-21 (14-21 (DIGNTSVN)) interacts with ATP. 115-118 (GADR) is a binding site for substrate. Asp117 acts as the Proton acceptor in catalysis. Residue Asp137 participates in K(+) binding. An ATP-binding site is contributed by Thr140. Thr192 provides a ligand contact to substrate.

It belongs to the type III pantothenate kinase family. In terms of assembly, homodimer. NH4(+) is required as a cofactor. K(+) serves as cofactor.

It localises to the cytoplasm. The catalysed reaction is (R)-pantothenate + ATP = (R)-4'-phosphopantothenate + ADP + H(+). The protein operates within cofactor biosynthesis; coenzyme A biosynthesis; CoA from (R)-pantothenate: step 1/5. Catalyzes the phosphorylation of pantothenate (Pan), the first step in CoA biosynthesis. The sequence is that of Type III pantothenate kinase from Dehalococcoides mccartyi (strain ATCC BAA-2100 / JCM 16839 / KCTC 5957 / BAV1).